Reading from the N-terminus, the 254-residue chain is Insulin-like growth factor-binding protein 4 (254 aa).

A signal peptide spans 1 to 21; it reads MLPFGLVAALLLAAGPRPSLG. Residues 23 to 103 form the IGFBP N-terminal domain; sequence EAIHCPPCSE…MHGQGVCTEL (81 aa). 6 disulfide bridges follow: cysteine 27–cysteine 53, cysteine 30–cysteine 55, cysteine 38–cysteine 56, cysteine 44–cysteine 59, cysteine 67–cysteine 80, and cysteine 74–cysteine 100. Asparagine 125 is a glycosylation site (N-linked (GlcNAc...) asparagine). 4 disulfides stabilise this stretch: cysteine 131-cysteine 138, cysteine 170-cysteine 200, cysteine 211-cysteine 222, and cysteine 224-cysteine 245. In terms of domain architecture, Thyroglobulin type-1 spans 167–245; the sequence is QGSCQSELHR…GLEPKGELDC (79 aa). The residue at position 251 (serine 251) is a Phosphoserine.

Binds IGF2 more than IGF1.

It localises to the secreted. Functionally, IGF-binding proteins prolong the half-life of the IGFs and have been shown to either inhibit or stimulate the growth promoting effects of the IGFs on cell culture. They alter the interaction of IGFs with their cell surface receptors. This is Insulin-like growth factor-binding protein 4 (Igfbp4) from Mus musculus (Mouse).